A 417-amino-acid chain; its full sequence is Gamma-glutamyl phosphate reductase (417 aa).

This sequence belongs to the gamma-glutamyl phosphate reductase family.

The protein localises to the cytoplasm. The catalysed reaction is L-glutamate 5-semialdehyde + phosphate + NADP(+) = L-glutamyl 5-phosphate + NADPH + H(+). Its pathway is amino-acid biosynthesis; L-proline biosynthesis; L-glutamate 5-semialdehyde from L-glutamate: step 2/2. In terms of biological role, catalyzes the NADPH-dependent reduction of L-glutamate 5-phosphate into L-glutamate 5-semialdehyde and phosphate. The product spontaneously undergoes cyclization to form 1-pyrroline-5-carboxylate. The protein is Gamma-glutamyl phosphate reductase of Escherichia coli (strain 55989 / EAEC).